Consider the following 36-residue polypeptide: Peruvianin-1 (36 aa).

Belongs to the germin family. As to quaternary structure, homohexamer, possibly consisting of a trimer of dimers. Glycosylated.

With respect to regulation, inhibited by iodoacetamide and trans-epoxysuccinyl-L-leucylamido(4-guanidino)butane (E-64) but not by phenylmethylsulfonyl fluoride (PMSF), pepstatin-A, ethylenediamine tetra acetic acid (EDTA) or ethylene glycol tetraacetic acid (EGTA). In terms of biological role, cysteine protease able to degrade azocasein and benzoyl-arginine-beta-naphtylamide (BANA) in vitro. The protein is Peruvianin-1 of Thevetia peruviana (Yellow oleander).